An 83-amino-acid polypeptide reads, in one-letter code: RNA-binding protein Hfq (83 aa).

Residues 9 to 69 (DQLLNTARKE…ISTIIPAKPI (61 aa)) form the Sm domain.

Belongs to the Hfq family. As to quaternary structure, homohexamer.

RNA chaperone that binds small regulatory RNA (sRNAs) and mRNAs to facilitate mRNA translational regulation in response to envelope stress, environmental stress and changes in metabolite concentrations. Also binds with high specificity to tRNAs. This Leptospira biflexa serovar Patoc (strain Patoc 1 / Ames) protein is RNA-binding protein Hfq.